We begin with the raw amino-acid sequence, 93 residues long: Small ribosomal subunit protein uS19m (93 aa).

This sequence belongs to the universal ribosomal protein uS19 family. As to quaternary structure, component of the mitochondrial small ribosomal subunit (mt-SSU). Mature yeast 74S mitochondrial ribosomes consist of a small (37S) and a large (54S) subunit. The 37S small subunit contains a 15S ribosomal RNA (15S mt-rRNA) and at least 32 different proteins. The 54S large subunit contains a 21S rRNA (21S mt-rRNA) and at least 45 different proteins.

It is found in the mitochondrion. Its function is as follows. Component of the mitochondrial ribosome (mitoribosome), a dedicated translation machinery responsible for the synthesis of mitochondrial genome-encoded proteins, including at least some of the essential transmembrane subunits of the mitochondrial respiratory chain. The mitoribosomes are attached to the mitochondrial inner membrane and translation products are cotranslationally integrated into the membrane. The chain is Small ribosomal subunit protein uS19m (rsm19) from Schizosaccharomyces pombe (strain 972 / ATCC 24843) (Fission yeast).